A 161-amino-acid chain; its full sequence is RNA pyrophosphohydrolase (161 aa).

The Nudix hydrolase domain maps to 6–149 (GFRPNVGIIL…KRDVYRKAMV (144 aa)). A Nudix box motif is present at residues 38–59 (GGIQFGETPEQALFRELREEIG).

This sequence belongs to the Nudix hydrolase family. RppH subfamily. Requires a divalent metal cation as cofactor.

In terms of biological role, accelerates the degradation of transcripts by removing pyrophosphate from the 5'-end of triphosphorylated RNA, leading to a more labile monophosphorylated state that can stimulate subsequent ribonuclease cleavage. The protein is RNA pyrophosphohydrolase of Acinetobacter baumannii (strain AB307-0294).